A 332-amino-acid chain; its full sequence is Peroxidase C1C (332 aa).

An N-terminal signal peptide occupies residues 1-9; that stretch reads MLHASFSNA. Glutamine 10 is modified (pyrrolidone carboxylic acid). 4 disulfides stabilise this stretch: cysteine 20–cysteine 100, cysteine 53–cysteine 58, cysteine 106–cysteine 310, and cysteine 186–cysteine 218. N-linked (GlcNAc...) asparagine glycosylation occurs at asparagine 22. Catalysis depends on histidine 51, which acts as the Proton acceptor. Ca(2+) is bound by residues aspartate 52, valine 55, glycine 57, aspartate 59, and serine 61. A glycan (N-linked (GlcNAc...) asparagine) is linked at asparagine 66. Residue proline 148 participates in substrate binding. Position 179 (histidine 179) interacts with heme b. Threonine 180 contacts Ca(2+). Asparagine 195, asparagine 207, and asparagine 223 each carry an N-linked (GlcNAc...) asparagine glycan. Residues aspartate 231, threonine 234, and aspartate 239 each contribute to the Ca(2+) site. Asparagine 264 is a glycosylation site (N-linked (GlcNAc...) asparagine).

This sequence belongs to the peroxidase family. Classical plant (class III) peroxidase subfamily. It depends on Ca(2+) as a cofactor. The cofactor is heme b.

It is found in the secreted. The protein localises to the vacuole. It catalyses the reaction 2 a phenolic donor + H2O2 = 2 a phenolic radical donor + 2 H2O. Functionally, removal of H(2)O(2), oxidation of toxic reductants, biosynthesis and degradation of lignin, suberization, auxin catabolism, response to environmental stresses such as wounding, pathogen attack and oxidative stress. These functions might be dependent on each isozyme/isoform in each plant tissue. This is Peroxidase C1C (PRXC1C) from Armoracia rusticana (Horseradish).